The primary structure comprises 130 residues: Small ribosomal subunit protein uS8 (130 aa).

The protein belongs to the universal ribosomal protein uS8 family. Part of the 30S ribosomal subunit.

Functionally, one of the primary rRNA binding proteins, it binds directly to 16S rRNA central domain where it helps coordinate assembly of the platform of the 30S subunit. This chain is Small ribosomal subunit protein uS8, found in Methanococcus voltae.